The following is a 269-amino-acid chain: Myelin protein zero-like protein 1 (269 aa).

The signal sequence occupies residues 1-35 (MAASAGAGAVIAAPDSRRWLWSVLAAALGLLTAGV). The 111-residue stretch at 36–146 (SALEVYTPKE…VKNPPDIVVQ (111 aa)) folds into the Ig-like V-type domain. Topologically, residues 36–162 (SALEVYTPKE…YVVEKENLPV (127 aa)) are extracellular. Asparagine 50 and asparagine 130 each carry an N-linked (GlcNAc...) asparagine glycan. Cysteine 58 and cysteine 135 are oxidised to a cystine. The chain crosses the membrane as a helical span at residues 163-183 (FPVWVVVGIVTAVVLGLTLLI). The Cytoplasmic portion of the chain corresponds to 184 to 269 (SMILAVLYRR…SVVYADIRKN (86 aa)). The disordered stretch occupies residues 199–238 (DYTGCSTSESLSPVKQAPRKSPSDTEGLVKSLPSGSHQGP). Residues 202-211 (GCSTSESLSP) show a composition bias toward polar residues. A phosphoserine mark is found at serine 204, serine 206, serine 208, serine 210, serine 219, and serine 221. The ITIM motif 1 signature appears at 239–244 (VIYAQL). Tyrosine 241 bears the Phosphotyrosine mark. The residue at position 260 (serine 260) is a Phosphoserine. An ITIM motif 2 motif is present at residues 261–266 (VVYADI). At tyrosine 263 the chain carries Phosphotyrosine.

The protein belongs to the myelin P0 protein family. As to quaternary structure, interacts with phosphorylated PTPN11/SHP-2. Phosphorylated on tyrosine residues upon stimulation with pervanadate and concanavalin-A (ConA). Phosphorylation at Tyr-241 and Tyr-263 is required for interaction with PTPN11/SHP-2. Dephosphorylated by PTPN11/SHP-2 (in vitro). Post-translationally, N-glycosylated. N-glycosylation is required for concanavalin A binding. As to expression, widely expressed with highest levels in heart, placenta, kidney and pancreas. Isoform 3 is relatively abundant in hematopoietic tissues and fetal liver. Isoform 1 and isoform 3 are expressed in CD14- PB monocytes and pre-B cell progenitors. Isoform 3 appears to be the major isoform in CD34- promyelocytic and promonocytic cells. During differentiation in monocytic cells, the expression level of isoform 3 decreases and that of isoform 1 increases. Isoform 1 is prominent in stromal cells and, to a lesser extent, in umbilical vein endothelial cells and erythroid progenitors. Isoform 2 is expressed in a erythroid progenitor cell line.

Its subcellular location is the membrane. Its function is as follows. Cell surface receptor, which is involved in signal transduction processes. Recruits PTPN11/SHP-2 to the cell membrane and is a putative substrate of PTPN11/SHP-2. Is a major receptor for concanavalin-A (ConA) and is involved in cellular signaling induced by ConA, which probably includes Src family tyrosine-protein kinases. Isoform 3 seems to have a dominant negative role; it blocks tyrosine phosphorylation of MPZL1 induced by ConA. Isoform 1, but not isoform 2 and isoform 3, may be involved in regulation of integrin-mediated cell motility. The protein is Myelin protein zero-like protein 1 (MPZL1) of Homo sapiens (Human).